The following is a 431-amino-acid chain: Argininosuccinate lyase (431 aa).

The protein belongs to the lyase 1 family. Argininosuccinate lyase subfamily.

The protein localises to the cytoplasm. It catalyses the reaction 2-(N(omega)-L-arginino)succinate = fumarate + L-arginine. The protein operates within amino-acid biosynthesis; L-arginine biosynthesis; L-arginine from L-ornithine and carbamoyl phosphate: step 3/3. This Stenotrophomonas maltophilia (strain K279a) protein is Argininosuccinate lyase.